The following is a 263-amino-acid chain: MTQPSLNPLVIKLGGAALSCSQTLSQLFGAIASYQQKEQRQIVIVHGGGYLVDELMEKLQLPTVKKNGLRVTPYDQIPLIAGALAGTANKLLQGQAMADGLNAIGLSLADGGLCQVEELDPELGAVGKATPGDSRLLQTILNAGALPIISSIGLTAQGQLMNVNADQAAVAVAGALDAQLVLLSDVSGVLDGKGHLIKSLNQQEADALIAGKVITDGMIVKVQAALEAANDLGRAIEVATWRYPENLEKLFAGESIGTQFLPA.

Substrate contacts are provided by residues 48 to 49, arginine 70, and asparagine 162; that span reads GG.

It belongs to the acetylglutamate kinase family. ArgB subfamily.

The protein localises to the cytoplasm. The enzyme catalyses N-acetyl-L-glutamate + ATP = N-acetyl-L-glutamyl 5-phosphate + ADP. Its pathway is amino-acid biosynthesis; L-arginine biosynthesis; N(2)-acetyl-L-ornithine from L-glutamate: step 2/4. Its function is as follows. Catalyzes the ATP-dependent phosphorylation of N-acetyl-L-glutamate. This is Acetylglutamate kinase from Vibrio vulnificus (strain YJ016).